A 952-amino-acid polypeptide reads, in one-letter code: Glycine dehydrogenase (decarboxylating) (952 aa).

An N6-(pyridoxal phosphate)lysine modification is found at Lys-703.

It belongs to the GcvP family. The glycine cleavage system is composed of four proteins: P, T, L and H. It depends on pyridoxal 5'-phosphate as a cofactor.

It catalyses the reaction N(6)-[(R)-lipoyl]-L-lysyl-[glycine-cleavage complex H protein] + glycine + H(+) = N(6)-[(R)-S(8)-aminomethyldihydrolipoyl]-L-lysyl-[glycine-cleavage complex H protein] + CO2. Its function is as follows. The glycine cleavage system catalyzes the degradation of glycine. The P protein binds the alpha-amino group of glycine through its pyridoxal phosphate cofactor; CO(2) is released and the remaining methylamine moiety is then transferred to the lipoamide cofactor of the H protein. The chain is Glycine dehydrogenase (decarboxylating) from Mycobacterium leprae (strain Br4923).